A 211-amino-acid chain; its full sequence is MRLTAKQVTWLKVCLHLAGLLPFLWLAWAINHGGLGADPVKDIQHFTGRTALKFLLATLLITPLARYAKQPLLIRTRRLLGLWCFAWATLHLTSYALLELGVNNLALLGKELITRPYLTLGIISWVILLALAFTSTQAMQRKLGKHWQQLHNFVYLVAILAPIHYLWSVKIISPQPLIYAGLAVLLLALRYKKLLSLFNQLRKQVHNKLSL.

5 consecutive transmembrane segments (helical) span residues 10 to 30 (WLKVCLHLAGLLPFLWLAWAI), 82 to 102 (LWCFAWATLHLTSYALLELGV), 116 to 136 (PYLTLGIISWVILLALAFTST), 153 to 173 (FVYLVAILAPIHYLWSVKIIS), and 178 to 198 (IYAGLAVLLLALRYKKLLSLF).

The protein belongs to the MsrQ family. Heterodimer of a catalytic subunit (MsrP) and a heme-binding subunit (MsrQ). It depends on FMN as a cofactor. Requires heme b as cofactor.

It localises to the cell inner membrane. Its function is as follows. Part of the MsrPQ system that repairs oxidized periplasmic proteins containing methionine sulfoxide residues (Met-O), using respiratory chain electrons. Thus protects these proteins from oxidative-stress damage caused by reactive species of oxygen and chlorine generated by the host defense mechanisms. MsrPQ is essential for the maintenance of envelope integrity under bleach stress, rescuing a wide series of structurally unrelated periplasmic proteins from methionine oxidation, including the primary periplasmic chaperone SurA and the lipoprotein Pal. MsrQ provides electrons for reduction to the reductase catalytic subunit MsrP, using the quinone pool of the respiratory chain. This Escherichia coli (strain UTI89 / UPEC) protein is Protein-methionine-sulfoxide reductase heme-binding subunit MsrQ.